The primary structure comprises 356 residues: Alanine racemase, catabolic (356 aa).

Lys-35 acts as the Proton acceptor; specific for D-alanine in catalysis. Residue Lys-35 is modified to N6-(pyridoxal phosphate)lysine. Position 130 (Arg-130) interacts with substrate. Tyr-253 (proton acceptor; specific for L-alanine) is an active-site residue. Substrate is bound at residue Met-301.

Belongs to the alanine racemase family. Pyridoxal 5'-phosphate is required as a cofactor.

The catalysed reaction is L-alanine = D-alanine. Its function is as follows. Isomerizes L-alanine to D-alanine which is then oxidized to pyruvate by DadA. The polypeptide is Alanine racemase, catabolic (dadX) (Escherichia coli O157:H7).